A 2566-amino-acid polypeptide reads, in one-letter code: Zinc finger protein GLI1 (2566 aa).

3 disordered regions span residues 349-375 (HHSS…SQSS), 430-508 (DIRR…RSTG), and 985-1046 (KSIE…GDPD). Composition is skewed to polar residues over residues 434 to 444 (TLSSNGNSSHT) and 457 to 492 (WSPN…YQQH). A compositionally biased stretch (low complexity) spans 493-508 (SGYTSTSGSSGNRSTG). The span at 993 to 1016 (WQNQNVFSSRRNSTRDPSNNNNSG) shows a compositional bias: polar residues. The span at 1023-1035 (DEPDVDDDEELDD) shows a compositional bias: acidic residues. Residues 1088 to 1110 (RECVRGTRPFKAQYMLVVHMRRH) form a C2H2-type 1; degenerate zinc finger. 3 consecutive C2H2-type zinc fingers follow at residues 1116-1140 (HKCI…LRSH), 1146-1171 (YQCE…NRTH), and 1177-1202 (YTCK…KTVH). 5 disordered regions span residues 1254-1313 (GNSN…PRDS), 1465-1491 (LSTT…TKQK), 1650-1677 (SKNM…NQNE), 1727-1791 (AAAS…MDND), and 2067-2091 (MHFS…NRPH). Composition is skewed to low complexity over residues 1661–1677 (NNNE…NQNE) and 1727–1743 (AAAS…TTAS). Residues 1752–1769 (NHHHQKQQPKHSHQHQNR) are compositionally biased toward basic residues. The segment covering 1770 to 1791 (TKSINSDNNYSNQDNVSTMDND) has biased composition (polar residues). The span at 2070–2090 (SPHSYVHSSSSNSSPFNSNRP) shows a compositional bias: low complexity.

The protein belongs to the GLI C2H2-type zinc-finger protein family. Expressed in female-paired or unpaired males along the ventral surface in neurons and skin tegument cells. In virgin and mature females, expressed bilaterally along the edges of the body in neurons. In mature females, also expressed in skin tegument cells.

Its subcellular location is the nucleus. Functionally, probable transcription factor which plays an essential role in males to trigger female sexual development by inducing NRPS expression in male. NRPS produces the pheromone beta-alanyl-tryptamine (BATT), which stimulates female sexual development. This Schistosoma mansoni (Blood fluke) protein is Zinc finger protein GLI1.